The chain runs to 471 residues: Tryptophanase (471 aa).

Residues Lys5, Lys115, and Lys156 each carry the N6-acetyllysine modification. Lys270 bears the N6-(pyridoxal phosphate)lysine mark. Lys450 is subject to N6-acetyllysine.

It belongs to the beta-eliminating lyase family. As to quaternary structure, homotetramer. Pyridoxal 5'-phosphate is required as a cofactor.

It catalyses the reaction L-tryptophan + H2O = indole + pyruvate + NH4(+). It functions in the pathway amino-acid degradation; L-tryptophan degradation via pyruvate pathway; indole and pyruvate from L-tryptophan: step 1/1. In Escherichia coli O6:H1 (strain CFT073 / ATCC 700928 / UPEC), this protein is Tryptophanase.